Reading from the N-terminus, the 399-residue chain is Bombesin receptor subtype-3 (399 aa).

The span at 1-31 (MSQRQPQSPNQTLISTTNDTESSSSVVPNDS) shows a compositional bias: polar residues. The segment at 1–38 (MSQRQPQSPNQTLISTTNDTESSSSVVPNDSTNKRRTG) is disordered. The Extracellular segment spans residues 1 to 41 (MSQRQPQSPNQTLISTTNDTESSSSVVPNDSTNKRRTGDNS). Residues asparagine 10, asparagine 18, and asparagine 29 are each glycosylated (N-linked (GlcNAc...) asparagine). A helical membrane pass occupies residues 42-63 (PGIEALCAIYITYAVIISVGIL). At 64-82 (GNAILIKVFFKTKSMQTVP) the chain is on the cytoplasmic side. Residues 83-103 (NIFITSLAFGDLLLLLTCVPV) traverse the membrane as a helical segment. Residues 104–121 (DVTHYLAEGWLFGRIGCK) lie on the Extracellular side of the membrane. A disulfide bridge connects residues cysteine 120 and cysteine 203. Residues 122-143 (VLSFIRLTSVGVSVFTLTILSA) form a helical membrane-spanning segment. At 144-163 (DRYKAVVKPLERQPPNAILK) the chain is on the cytoplasmic side. Residues 164–184 (TCAKAGCIWIMSMIIALPEAI) traverse the membrane as a helical segment. Topologically, residues 185–220 (FSNVYTFQDPDKNVTFKACASYPVSERLLQEIHSLL) are extracellular. The chain crosses the membrane as a helical span at residues 221-241 (CFLVFYIIPLSIISVYYSLIA). Residues 242-272 (RTLYKSTLNIPTEEQRHARKQIESRKRIAKT) are Cytoplasmic-facing. Residues 273-293 (VLVLVALFALCWLPNHLLYLY) traverse the membrane as a helical segment. The Extracellular portion of the chain corresponds to 294 to 313 (RSFTSQTYMDSSTVHLFVTI). Residues 314 to 333 (ISRILAFSNSCVNPFALYWL) traverse the membrane as a helical segment. The Cytoplasmic portion of the chain corresponds to 334-399 (SNTFQQHFKA…CSVKKEDDRV (66 aa)).

Belongs to the G-protein coupled receptor 1 family. Interacts with C6orf89.

The protein resides in the cell membrane. Role in sperm cell division, maturation, or function. This receptor mediates its action by association with G proteins that activate a phosphatidylinositol-calcium second messenger system. This Ovis aries (Sheep) protein is Bombesin receptor subtype-3 (BRS3).